We begin with the raw amino-acid sequence, 183 residues long: NADH-quinone oxidoreductase subunit B 2 (183 aa).

[4Fe-4S] cluster contacts are provided by cysteine 47, cysteine 48, cysteine 113, and cysteine 142.

This sequence belongs to the complex I 20 kDa subunit family. NDH-1 is composed of 14 different subunits. Subunits NuoB, C, D, E, F, and G constitute the peripheral sector of the complex. [4Fe-4S] cluster serves as cofactor.

The protein resides in the cell inner membrane. The enzyme catalyses a quinone + NADH + 5 H(+)(in) = a quinol + NAD(+) + 4 H(+)(out). Functionally, NDH-1 shuttles electrons from NADH, via FMN and iron-sulfur (Fe-S) centers, to quinones in the respiratory chain. The immediate electron acceptor for the enzyme in this species is believed to be ubiquinone. Couples the redox reaction to proton translocation (for every two electrons transferred, four hydrogen ions are translocated across the cytoplasmic membrane), and thus conserves the redox energy in a proton gradient. This chain is NADH-quinone oxidoreductase subunit B 2, found in Anaeromyxobacter sp. (strain Fw109-5).